The chain runs to 832 residues: WD repeat-containing protein 75 (832 aa).

WD repeat units follow at residues 4–43, 47–86, 90–134, 148–187, 196–233, 239–278, 281–320, 326–364, 378–425, 432–474, 485–523, 527–567, and 572–609; these read KTDI…KVYS, EEWL…KLWD, GILI…QLVA, KELS…YFFR, LKAT…RLWR, KEYT…VQWQ, DMSK…SIIE, SGLI…QFYS, QQEY…KLWA, SFVL…KAWC, YWSC…TLWS, WELL…CCWN, and ALEW…FVFK. Disordered stretches follow at residues 704–723 and 759–811; these read QHKL…HTQG and VREE…AQER. Residues 764–785 are compositionally biased toward acidic residues; it reads DSSEQEMDSEKEEEESEEEMEA. Basic and acidic residues predominate over residues 799–811; that stretch reads DEQKPKLSKAQER.

As to quaternary structure, component of the proposed t-UTP subcomplex of the ribosomal small subunit (SSU) processome. SSU processome is composed of more than 70 proteins and the RNA chaperone small nucleolar RNA (snoRNA) U3.

Its subcellular location is the nucleus. The protein localises to the nucleolus. In terms of biological role, ribosome biogenesis factor. Part of the small subunit (SSU) processome, first precursor of the small eukaryotic ribosomal subunit. During the assembly of the SSU processome in the nucleolus, many ribosome biogenesis factors, an RNA chaperone and ribosomal proteins associate with the nascent pre-rRNA and work in concert to generate RNA folding, modifications, rearrangements and cleavage as well as targeted degradation of pre-ribosomal RNA by the RNA exosome. Involved in nucleolar processing of pre-18S ribosomal RNA. Required for optimal pre-ribosomal RNA transcription by RNA polymerase I. This is WD repeat-containing protein 75 (wdr75) from Danio rerio (Zebrafish).